We begin with the raw amino-acid sequence, 724 residues long: Putative mediator of RNA polymerase II transcription subunit 1 (724 aa).

Disordered stretches follow at residues 33–52 (SQQQ…VTSN), 147–167 (QQQQ…PLVE), and 486–524 (HRSS…NENG). Residues 140–200 (YLNQQKEQQQ…QEMTNELNNK (61 aa)) are a coiled coil. Low complexity-rich tracts occupy residues 147–164 (QQQQ…QPQP) and 488–510 (SSQQ…QQQQ). Polar residues predominate over residues 511-524 (KKLNSVDESMNENG).

Belongs to the Mediator complex subunit 1 family. In terms of assembly, component of the Mediator complex.

It localises to the nucleus. Component of the Mediator complex, a coactivator involved in the regulated transcription of nearly all RNA polymerase II-dependent genes. Mediator functions as a bridge to convey information from gene-specific regulatory proteins to the basal RNA polymerase II transcription machinery. Mediator is recruited to promoters by direct interactions with regulatory proteins and serves as a scaffold for the assembly of a functional preinitiation complex with RNA polymerase II and the general transcription factors. In Dictyostelium discoideum (Social amoeba), this protein is Putative mediator of RNA polymerase II transcription subunit 1 (med1).